A 376-amino-acid polypeptide reads, in one-letter code: DNA replication and repair protein RecF (376 aa).

35-42 (GDNGSGKT) contributes to the ATP binding site.

This sequence belongs to the RecF family.

It localises to the cytoplasm. Its function is as follows. The RecF protein is involved in DNA metabolism; it is required for DNA replication and normal SOS inducibility. RecF binds preferentially to single-stranded, linear DNA. It also seems to bind ATP. The polypeptide is DNA replication and repair protein RecF (Agrobacterium fabrum (strain C58 / ATCC 33970) (Agrobacterium tumefaciens (strain C58))).